The following is a 909-amino-acid chain: Protein translocase subunit SecA (909 aa).

Residues glutamine 87, 105 to 109, and aspartate 507 contribute to the ATP site; that span reads GEGKT. 2 disordered regions span residues 567–586 and 859–909; these read RRID…PGSS and YSEA…GKLD. Residues 865-889 show a composition bias toward basic and acidic residues; that stretch reads EHQSVTEGHEAKQQPFVRKSDKIGR. Zn(2+)-binding residues include cysteine 893, cysteine 895, cysteine 904, and histidine 905. Residues 899–909 are compositionally biased toward basic residues; the sequence is RKYKQCHGKLD.

Belongs to the SecA family. As to quaternary structure, monomer and homodimer. Part of the essential Sec protein translocation apparatus which comprises SecA, SecYEG and auxiliary proteins SecDF-YajC and YidC. Requires Zn(2+) as cofactor.

Its subcellular location is the cell inner membrane. It localises to the cytoplasm. The catalysed reaction is ATP + H2O + cellular proteinSide 1 = ADP + phosphate + cellular proteinSide 2.. Part of the Sec protein translocase complex. Interacts with the SecYEG preprotein conducting channel. Has a central role in coupling the hydrolysis of ATP to the transfer of proteins into and across the cell membrane, serving both as a receptor for the preprotein-SecB complex and as an ATP-driven molecular motor driving the stepwise translocation of polypeptide chains across the membrane. This chain is Protein translocase subunit SecA, found in Nitrosomonas eutropha (strain DSM 101675 / C91 / Nm57).